The chain runs to 517 residues: Methionine aminopeptidase 1b (517 aa).

Residues 74–94 (YCNKENSNNNNNNNNNNNNNL) are disordered. The segment covering 79-94 (NSNNNNNNNNNNNNNL) has biased composition (low complexity). The C6H2-type zinc finger occupies 114–166 (ENLCSGCKKVLIKKLSCPICLKNKIFSYFCNQECFKGSWKEHQKIHENMNKEN). The Zn(2+) site is built by Cys117, Cys120, Cys130, Cys133, Cys143, Cys147, His155, and His159. An a protein-binding site is contributed by His325. Asp342, Asp353, and His419 together coordinate Zn(2+). His426 is a binding site for a protein. Glu452 and Glu483 together coordinate Zn(2+).

Belongs to the peptidase M24A family. Methionine aminopeptidase type 1 subfamily. As to quaternary structure, associates with the 60S ribosomal subunit of the 80S translational complex. Requires Zn(2+) as cofactor. Co(2+) serves as cofactor. Mn(2+) is required as a cofactor. It depends on Fe(2+) as a cofactor.

It localises to the cytoplasm. The enzyme catalyses Release of N-terminal amino acids, preferentially methionine, from peptides and arylamides.. Inhibited by pyrimidine derivative XC11. In terms of biological role, cotranslationally removes the N-terminal methionine from nascent proteins. The N-terminal methionine is often cleaved when the second residue in the primary sequence is small and uncharged (Met-Ala-, Cys, Gly, Pro, Ser, Thr, or Val). May play an important role in parasite growth during the blood asexual stage. This Plasmodium falciparum (isolate 3D7) protein is Methionine aminopeptidase 1b.